The chain runs to 528 residues: Purine-cytosine permease FCY21 (528 aa).

Over 1–90 (MPQTHEMSLN…DDSILNAASM (90 aa)) the chain is Cytoplasmic. Serine 43 is modified (phosphoserine). The residue at position 46 (threonine 46) is a Phosphothreonine. The helical transmembrane segment at 91–111 (WFSANMVLPAYAIGALGPMVF) threads the bilayer. At 112-118 (DLNFGQS) the chain is on the extracellular side. Residues 119–139 (VFVIIFFNLLGLVSVAFFSVF) form a helical membrane-spanning segment. The Cytoplasmic portion of the chain corresponds to 140 to 161 (GAELGLRQMILSRYLVGNIAAR). Residues 162-182 (IFSFINFIACIGWGIVNTVAS) form a helical membrane-spanning segment. Over 183–198 (SQVLNMVNPGHQCPLW) the chain is Extracellular. A helical membrane pass occupies residues 199–219 (AGCIVIIGATVIVTFFGYGVI). Topologically, residues 220-221 (HA) are cytoplasmic. The helical transmembrane segment at 222 to 242 (YEKWAWVPNFAVFLVIIARLA) threads the bilayer. At 243 to 260 (RSKKFVLGEWTSGPTTAG) the chain is on the extracellular side. Residues 261-281 (NVLSFGSTVYGFAAGWTTYAA) form a helical membrane-spanning segment. Residues 282–295 (DYTVYMPRKTNKYK) lie on the Cytoplasmic side of the membrane. A helical membrane pass occupies residues 296-316 (IFFSLVVGLATPLYFTMILGA). At 317-340 (AVAMAAIGDPAWKTYYDENSIGGL) the chain is on the extracellular side. Residues 341-361 (TFAVLVPNSVHGFGQFCCVLL) form a helical membrane-spanning segment. Residues 362–393 (SLSTIANNVPNMYTIALSVQATWEPLAKVPRV) are Cytoplasmic-facing. A helical transmembrane segment spans residues 394–414 (IWTLLGNAAALGIAIPACYYF). At 415–416 (ST) the chain is on the extracellular side. The chain crosses the membrane as a helical span at residues 417–437 (FMNYFMDSIGYYLAIYIAIAC). Residues 438–460 (SEHFIYRRSFSAYNVDDWDSWER) lie on the Cytoplasmic side of the membrane. A helical membrane pass occupies residues 461-481 (LPIGIAGTAALIVGAFGVALG). Over 482-493 (MCQTYWVGEISR) the chain is Extracellular. A helical membrane pass occupies residues 494-514 (LIGDYGGDIGFELGLSWAFIV). Over 515–528 (YNIARPFELKYFGR) the chain is Cytoplasmic.

The protein belongs to the purine-cytosine permease (2.A.39) family.

Its subcellular location is the membrane. Its function is as follows. Probable purine-cytosine permease. The chain is Purine-cytosine permease FCY21 (FCY21) from Saccharomyces cerevisiae (strain ATCC 204508 / S288c) (Baker's yeast).